The primary structure comprises 309 residues: Formamidopyrimidine-DNA glycosylase (309 aa).

Catalysis depends on P2, which acts as the Schiff-base intermediate with DNA. E3 acts as the Proton donor in catalysis. The active-site Proton donor; for beta-elimination activity is K56. DNA-binding residues include H106 and R129. The FPG-type zinc-finger motif lies at 271 to 305; it reads NVYGRQGNACPHCESTLENIKLNGRASVYCPLCQP. The active-site Proton donor; for delta-elimination activity is R295.

This sequence belongs to the FPG family. As to quaternary structure, monomer. The cofactor is Zn(2+).

The enzyme catalyses Hydrolysis of DNA containing ring-opened 7-methylguanine residues, releasing 2,6-diamino-4-hydroxy-5-(N-methyl)formamidopyrimidine.. It carries out the reaction 2'-deoxyribonucleotide-(2'-deoxyribose 5'-phosphate)-2'-deoxyribonucleotide-DNA = a 3'-end 2'-deoxyribonucleotide-(2,3-dehydro-2,3-deoxyribose 5'-phosphate)-DNA + a 5'-end 5'-phospho-2'-deoxyribonucleoside-DNA + H(+). Functionally, involved in base excision repair of DNA damaged by oxidation or by mutagenic agents. Acts as a DNA glycosylase that recognizes and removes damaged bases. Has a preference for oxidized purines, such as 7,8-dihydro-8-oxoguanine (8-oxoG). Has AP (apurinic/apyrimidinic) lyase activity and introduces nicks in the DNA strand. Cleaves the DNA backbone by beta-delta elimination to generate a single-strand break at the site of the removed base with both 3'- and 5'-phosphates. In Psychrobacter arcticus (strain DSM 17307 / VKM B-2377 / 273-4), this protein is Formamidopyrimidine-DNA glycosylase.